The chain runs to 302 residues: MPIIIPENLPASNTLTGENIFVMHEARALSQDIRPLKILILNLMPQKIQTETQLLRLLGNTPLQVDVRLLHIESHESKNTSKEHLLRFYETFDDVKDEKFDGMIITGAPVETLEYEEVDYWEELKRIMEFSVTNVTSTLHICWGAQAGLYYHYGIPKHRLKKKMFGVFKHTLNKDGVKLLRGFDNEFYVPHSRHTEVLREDILKIPELKILSESEESGLYIVATKEAKQIFVMGHSEYDPGSLKWEYDRDSAKGMDIDVPKNYYPNDDPTKEPIVRWRSHANLLFSNWLNYYVYQETPYEHK.

C142 functions as the Acyl-thioester intermediate in the catalytic mechanism. Residues K163 and S192 each coordinate substrate. Catalysis depends on H235, which acts as the Proton acceptor. The active site involves E237. R249 provides a ligand contact to substrate.

The protein belongs to the MetA family.

The protein resides in the cytoplasm. The catalysed reaction is L-homoserine + acetyl-CoA = O-acetyl-L-homoserine + CoA. It participates in amino-acid biosynthesis; L-methionine biosynthesis via de novo pathway; O-acetyl-L-homoserine from L-homoserine: step 1/1. Its function is as follows. Transfers an acetyl group from acetyl-CoA to L-homoserine, forming acetyl-L-homoserine. The protein is Homoserine O-acetyltransferase of Clostridium novyi (strain NT).